The following is a 188-amino-acid chain: Molybdopterin synthase catalytic subunit (188 aa).

Residues 1–14 (MTTQPPQDQTSTTP) show a composition bias toward low complexity. Residues 1–23 (MTTQPPQDQTSTTPSLPPHLDPT) form a disordered region. Substrate contacts are provided by residues 134–135 (HR), K150, and 157–159 (KRE).

Belongs to the MoaE family. MOCS2B subfamily. In terms of assembly, heterotetramer; composed of 2 small (MOCS2A) and 2 large (MOCS2B) subunits.

It localises to the cytoplasm. It catalyses the reaction 2 [molybdopterin-synthase sulfur-carrier protein]-C-terminal-Gly-aminoethanethioate + cyclic pyranopterin phosphate + H2O = molybdopterin + 2 [molybdopterin-synthase sulfur-carrier protein]-C-terminal Gly-Gly + 2 H(+). It participates in cofactor biosynthesis; molybdopterin biosynthesis. Its function is as follows. Catalytic subunit of the molybdopterin synthase complex, a complex that catalyzes the conversion of precursor Z into molybdopterin. Acts by mediating the incorporation of 2 sulfur atoms from thiocarboxylated MOCS2A into precursor Z to generate a dithiolene group. This chain is Molybdopterin synthase catalytic subunit, found in Neosartorya fischeri (strain ATCC 1020 / DSM 3700 / CBS 544.65 / FGSC A1164 / JCM 1740 / NRRL 181 / WB 181) (Aspergillus fischerianus).